The following is a 775-amino-acid chain: 5-methyltetrahydropteroyltriglutamate--homocysteine methyltransferase (775 aa).

Residues 15–18 and Lys118 each bind 5-methyltetrahydropteroyltri-L-glutamate; that span reads RELK. L-homocysteine-binding positions include 448–450 and Glu501; that span reads IGS. Residues 448-450 and Glu501 contribute to the L-methionine site; that span reads IGS. 5-methyltetrahydropteroyltri-L-glutamate contacts are provided by residues 532 to 533 and Trp578; that span reads RC. Residue Asp616 coordinates L-homocysteine. Position 616 (Asp616) interacts with L-methionine. Glu622 provides a ligand contact to 5-methyltetrahydropteroyltri-L-glutamate. Positions 658, 660, and 682 each coordinate Zn(2+). The active-site Proton donor is the His711. Position 743 (Cys743) interacts with Zn(2+).

Belongs to the vitamin-B12 independent methionine synthase family. It depends on Zn(2+) as a cofactor.

It catalyses the reaction 5-methyltetrahydropteroyltri-L-glutamate + L-homocysteine = tetrahydropteroyltri-L-glutamate + L-methionine. Its pathway is amino-acid biosynthesis; L-methionine biosynthesis via de novo pathway; L-methionine from L-homocysteine (MetE route): step 1/1. In terms of biological role, catalyzes the transfer of a methyl group from 5-methyltetrahydrofolate to homocysteine resulting in methionine formation. The chain is 5-methyltetrahydropteroyltriglutamate--homocysteine methyltransferase from Cytophaga hutchinsonii (strain ATCC 33406 / DSM 1761 / CIP 103989 / NBRC 15051 / NCIMB 9469 / D465).